Here is a 609-residue protein sequence, read N- to C-terminus: Dihydroxy-acid dehydratase (609 aa).

Residue Asp-81 participates in Mg(2+) binding. Residue Cys-122 participates in [2Fe-2S] cluster binding. Residues Asp-123 and Lys-124 each coordinate Mg(2+). Lys-124 carries the post-translational modification N6-carboxylysine. A [2Fe-2S] cluster-binding site is contributed by Cys-195. Glu-491 is a Mg(2+) binding site. The active-site Proton acceptor is Ser-517.

This sequence belongs to the IlvD/Edd family. In terms of assembly, homodimer. [2Fe-2S] cluster serves as cofactor. The cofactor is Mg(2+).

The catalysed reaction is (2R)-2,3-dihydroxy-3-methylbutanoate = 3-methyl-2-oxobutanoate + H2O. It catalyses the reaction (2R,3R)-2,3-dihydroxy-3-methylpentanoate = (S)-3-methyl-2-oxopentanoate + H2O. It participates in amino-acid biosynthesis; L-isoleucine biosynthesis; L-isoleucine from 2-oxobutanoate: step 3/4. Its pathway is amino-acid biosynthesis; L-valine biosynthesis; L-valine from pyruvate: step 3/4. In terms of biological role, functions in the biosynthesis of branched-chain amino acids. Catalyzes the dehydration of (2R,3R)-2,3-dihydroxy-3-methylpentanoate (2,3-dihydroxy-3-methylvalerate) into 2-oxo-3-methylpentanoate (2-oxo-3-methylvalerate) and of (2R)-2,3-dihydroxy-3-methylbutanoate (2,3-dihydroxyisovalerate) into 2-oxo-3-methylbutanoate (2-oxoisovalerate), the penultimate precursor to L-isoleucine and L-valine, respectively. The sequence is that of Dihydroxy-acid dehydratase from Acinetobacter baumannii (strain AB307-0294).